A 144-amino-acid chain; its full sequence is Large ribosomal subunit protein uL15 (144 aa).

Residues 1-54 are disordered; it reads MRLNTLSPAPGRVSAKKRVGRGIGSGLGKTAGRGHKGLKSRSGGSVKPGFEGGQ. Positions 21 to 31 are enriched in gly residues; the sequence is RGIGSGLGKTA.

Belongs to the universal ribosomal protein uL15 family. In terms of assembly, part of the 50S ribosomal subunit.

Functionally, binds to the 23S rRNA. In Saccharophagus degradans (strain 2-40 / ATCC 43961 / DSM 17024), this protein is Large ribosomal subunit protein uL15.